Here is a 738-residue protein sequence, read N- to C-terminus: MESCNCIEPQWPAEELLMKYQYISDFFIALAYFSIPLELIYFVKKSAVFPYRWVLVQFGAFIVLCGATHLINLWTFTMHSRTVATVMTIAKVLTAVVSCATALMLVHIIPDLLSVKTRELFLKNKAAELDREMGLIRTQEETGRHVRMLTHEIRSTLDRHTILRTTLVELGRTLALEECALWMPTRTGLELQLSYTLRQQNPVGYTVPIQLPVINQVFSTNRAVKISPNCPVARLRPLAGKYVPGEVVAVRVPLLHLNNFQINDWPELSTRRYALMVLMLPSDSARQWRVHELELVEVVADQVAVALSHAAILEESMRARDLLMEQNVALDLARREAETAIRARNDFLAVMNHEMRTPMHAVIALSSLLQETELTPEQRLMVETILKSSNLLATLINDVLDLSKLEDGSLQLDSGTFNLHAVFREVLNLIKPIASVKKLLLLLNLAPDLPEYAVGDEKRLIQIILNIVGNAMKFSKEGSISITAIVAKLESLRDARVPDFFPTPSENHFYLRVQVKDSGVGINPQDIPKLFIKFAQTQTTGARNSSGSGLGLAICRRFVNLMDGHIWLESEGLGKGCTAIFIVKLGIPERLNESKPPFMSKVAVDHGQTTFPGLKVLLMDDNGVSRMVTKGLLLHLGCDVTTVGSSEECIRVASQDHRVVFMDVGMPEGFEAAVRLHEKFTKRHERPLVVALTASTDRMTKENCMRVGMDGAILKPVSVDKMRSVLSDLLEHKVLFEC.

The next 3 helical transmembrane spans lie at 23-43 (ISDFFIALAYFSIPLELIYFV), 54-74 (VLVQFGAFIVLCGATHLINLW), and 89-109 (IAKVLTAVVSCATALMLVHII). Cu cation-binding residues include Cys-65 and His-69. The region spanning 158 to 307 (DRHTILRTTL…VVADQVAVAL (150 aa)) is the GAF domain. In terms of domain architecture, Histidine kinase spans 350–589 (VMNHEMRTPM…IFIVKLGIPE (240 aa)). His-353 is modified (phosphohistidine; by autocatalysis). The Response regulatory domain occupies 615-730 (KVLLMDDNGV…KMRSVLSDLL (116 aa)). Asp-663 carries the 4-aspartylphosphate modification.

This sequence belongs to the ethylene receptor family. As to quaternary structure, homodimer; disulfide-linked. Cu cation is required as a cofactor. In terms of processing, activation probably requires a transfer of a phosphate group between a His in the transmitter domain and an Asp of the receiver domain. As to expression, higher expression in arils than in seeds.

It localises to the endoplasmic reticulum membrane. It catalyses the reaction ATP + protein L-histidine = ADP + protein N-phospho-L-histidine.. Its function is as follows. May act early in the ethylene signal transduction pathway, possibly as an ethylene receptor, or as a regulator of the pathway. The protein is Ethylene receptor (ETR1) of Passiflora edulis (Passion fruit).